We begin with the raw amino-acid sequence, 700 residues long: Polyribonucleotide nucleotidyltransferase (700 aa).

Mg(2+) contacts are provided by D485 and D491. The 60-residue stretch at 552 to 611 (PRITVIKINPEKIRDVIGKGGAVIRALTEETGTTIELEDDGTVKIASSNGEATKEAIRRI) folds into the KH domain. The 69-residue stretch at 621–689 (GRIYNGKVIR…RQGRVRLSIK (69 aa)) folds into the S1 motif domain.

Belongs to the polyribonucleotide nucleotidyltransferase family. In terms of assembly, component of the RNA degradosome, which is a multiprotein complex involved in RNA processing and mRNA degradation. It depends on Mg(2+) as a cofactor.

It is found in the cytoplasm. It carries out the reaction RNA(n+1) + phosphate = RNA(n) + a ribonucleoside 5'-diphosphate. In terms of biological role, involved in mRNA degradation. Catalyzes the phosphorolysis of single-stranded polyribonucleotides processively in the 3'- to 5'-direction. The sequence is that of Polyribonucleotide nucleotidyltransferase from Shewanella baltica (strain OS155 / ATCC BAA-1091).